The primary structure comprises 41 residues: Virescein (41 aa).

At His-41 the chain carries Histidine amide.

As to quaternary structure, monomer. As to expression, hemolymph.

The protein localises to the secreted. Functionally, has antibacterial activity against Gram-positive and Gram-negative bacteria. This is Virescein from Heliothis virescens (Tobacco budworm moth).